Here is a 452-residue protein sequence, read N- to C-terminus: Low-affinity putrescine importer PlaP (452 aa).

The Cytoplasmic portion of the chain corresponds to 1-16 (MSHNVTPNTSRVELRK). A helical membrane pass occupies residues 17–37 (TLTLVPVVMMGLAYMQPMTLF). Residues 38 to 48 (DTFGIVSGLTD) lie on the Periplasmic side of the membrane. Residues 49 to 69 (GHVPTAYAFALIAILFTALSY) form a helical membrane-spanning segment. The Cytoplasmic portion of the chain corresponds to 70–95 (GKLVRRYPSAGSAYTYAQKSISPTVG). Residues 96–116 (FMVGWSSLLDYLFAPMINILL) form a helical membrane-spanning segment. Topologically, residues 117–123 (AKIYFEA) are periplasmic. Residues 124 to 144 (LVPSIPSWMFVVALVAFMTAF) traverse the membrane as a helical segment. The Cytoplasmic portion of the chain corresponds to 145–158 (NLRSLKSVANFNTV). The helical transmembrane segment at 159-179 (IVVLQVVLIAVILGMVVYGVF) threads the bilayer. Residues 180–199 (EGEGAGTLASTRPFWSGDAH) are Periplasmic-facing. The helical transmembrane segment at 200–220 (VIPMITGATILCFSFTGFDGI) threads the bilayer. The Cytoplasmic segment spans residues 221-237 (SNLSEETKDAERVIPRA). The chain crosses the membrane as a helical span at residues 238 to 258 (IFLTALIGGMIFIFATYFLQL). Residues 259 to 283 (YFPDISRFKDPDASQPEIMLYVAGK) are Periplasmic-facing. The helical transmembrane segment at 284-304 (AFQVGALIFSTITVLASGMAA) threads the bilayer. The Cytoplasmic portion of the chain corresponds to 305–339 (HAGVARLMYVMGRDGVFPKSFFGYVHPKWRTPAMN). The next 2 membrane-spanning stretches (helical) occupy residues 340–360 (IILV…MATA) and 361–381 (LINF…ISQF). At 382 to 394 (WIREKRNKTLKDH) the chain is on the cytoplasmic side. The helical transmembrane segment at 395–415 (FQYLFLPMCGALTVGALWVNL) threads the bilayer. The Periplasmic segment spans residues 416 to 417 (EE). The helical transmembrane segment at 418–438 (SSMVLGLIWAAIGLIYLACVT) threads the bilayer. Over 439–452 (KSFRNPVPQYEDVA) the chain is Cytoplasmic.

This sequence belongs to the amino acid-polyamine-organocation (APC) superfamily.

Its subcellular location is the cell inner membrane. It carries out the reaction putrescine(in) + H(+)(in) = putrescine(out) + H(+)(out). Functionally, putrescine importer. In Escherichia coli O157:H7, this protein is Low-affinity putrescine importer PlaP (plaP).